The chain runs to 279 residues: Pantothenate synthetase (279 aa).

26–33 (MGNLHDGH) contacts ATP. The active-site Proton donor is the histidine 33. Position 57 (glutamine 57) interacts with (R)-pantoate. Glutamine 57 contributes to the beta-alanine binding site. 144–147 (GKKD) is a binding site for ATP. A (R)-pantoate-binding site is contributed by glutamine 150. 181–184 (LSSR) is a binding site for ATP.

This sequence belongs to the pantothenate synthetase family. As to quaternary structure, homodimer.

It localises to the cytoplasm. It catalyses the reaction (R)-pantoate + beta-alanine + ATP = (R)-pantothenate + AMP + diphosphate + H(+). Its pathway is cofactor biosynthesis; (R)-pantothenate biosynthesis; (R)-pantothenate from (R)-pantoate and beta-alanine: step 1/1. Functionally, catalyzes the condensation of pantoate with beta-alanine in an ATP-dependent reaction via a pantoyl-adenylate intermediate. The chain is Pantothenate synthetase from Janthinobacterium sp. (strain Marseille) (Minibacterium massiliensis).